Consider the following 98-residue polypeptide: Large ribosomal subunit protein uL23 (98 aa).

It belongs to the universal ribosomal protein uL23 family. In terms of assembly, part of the 50S ribosomal subunit. Contacts protein L29, and trigger factor when it is bound to the ribosome.

One of the early assembly proteins it binds 23S rRNA. One of the proteins that surrounds the polypeptide exit tunnel on the outside of the ribosome. Forms the main docking site for trigger factor binding to the ribosome. This chain is Large ribosomal subunit protein uL23, found in Maricaulis maris (strain MCS10) (Caulobacter maris).